Consider the following 485-residue polypeptide: Amyloid beta A4 precursor protein-binding family B member 1-interacting protein (485 aa).

Polar residues predominate over residues 84–107 (QAQKTSGNQQSVVTQPSTGTNNDF). Positions 84–157 (QAQKTSGNQQ…LSQEEQEARA (74 aa)) are disordered. Over residues 125–147 (LPPPPPAPDLDLPPPPPPPPPEP) the composition is skewed to pro residues. Positions 175-262 (KKLVVKVHMY…KVLFLEKKEK (88 aa)) constitute a Ras-associating domain. The PH domain occupies 305 to 414 (VPELEGALYL…WVTGIRIAKY (110 aa)).

Belongs to the MRL family.

It is found in the cell membrane. It localises to the cytoplasm. The protein resides in the cytoskeleton. In terms of biological role, appears to function in the signal transduction from Ras activation to actin cytoskeletal remodeling. The polypeptide is Amyloid beta A4 precursor protein-binding family B member 1-interacting protein (APBB1IP) (Gallus gallus (Chicken)).